Reading from the N-terminus, the 573-residue chain is Probable D-xylulose kinase A (573 aa).

The substrate site is built by H97, R168, D284, and N285. Residues W366, 471–472, and N475 contribute to the ATP site; that span reads GG.

Belongs to the FGGY kinase family.

Its subcellular location is the cytoplasm. The enzyme catalyses D-xylulose + ATP = D-xylulose 5-phosphate + ADP + H(+). Functionally, highly specific D-xylulose kinase which participates in the catabolism of xylose. Xylose is a major component of hemicelluloses such as xylan. Most fungi utilize D-xylose via three enzymatic reactions, xylose reductase (XR), xylitol dehydrogenase (XDH), and xylulokinase, to form xylulose 5-phosphate, which enters pentose phosphate pathway. In Aspergillus fumigatus (strain ATCC MYA-4609 / CBS 101355 / FGSC A1100 / Af293) (Neosartorya fumigata), this protein is Probable D-xylulose kinase A (xkiA).